Here is a 233-residue protein sequence, read N- to C-terminus: Triosephosphate isomerase (233 aa).

8–10 (NWK) contacts substrate. H91 serves as the catalytic Electrophile. The Proton acceptor role is filled by E155. Substrate-binding residues include G161 and S192.

It belongs to the triosephosphate isomerase family. As to quaternary structure, homodimer.

It localises to the cytoplasm. The catalysed reaction is D-glyceraldehyde 3-phosphate = dihydroxyacetone phosphate. It functions in the pathway carbohydrate biosynthesis; gluconeogenesis. Its pathway is carbohydrate degradation; glycolysis; D-glyceraldehyde 3-phosphate from glycerone phosphate: step 1/1. In terms of biological role, involved in the gluconeogenesis. Catalyzes stereospecifically the conversion of dihydroxyacetone phosphate (DHAP) to D-glyceraldehyde-3-phosphate (G3P). This chain is Triosephosphate isomerase, found in Wolbachia sp. subsp. Brugia malayi (strain TRS).